The following is a 332-amino-acid chain: Multiple virulence factor regulator MvfR (332 aa).

One can recognise an HTH lysR-type domain in the interval 4 to 61 (HNLNHVNMFLQVIASGSISSAARILRKSHTAVSSAVSNLEIDLCVELVRRDGYKVEPT). Positions 21 to 40 (ISSAARILRKSHTAVSSAVS) form a DNA-binding region, H-T-H motif.

It belongs to the LysR transcriptional regulatory family. In terms of assembly, forms homooligomers.

The protein localises to the cell inner membrane. It localises to the secreted. Both 3,4-dihydroxy-2-heptylquinoline (PQS) and its precursor 4-hydroxy-2-heptylquinoline (HHQ) function as ligands and promote MvfR DNA-binding activity leading to transcriptional activation. Its function is as follows. Transcription regulator that plays a critical role in virulence by positively regulating the expression of multiple quorum sensing (QS)-regulated virulence factors, genes involved in protein secretion, translation, response to oxidative stress and the phnAB operon. At the stationary phase, negatively autoregulates its function through cleavage and translocation to the extracellular space. This is Multiple virulence factor regulator MvfR from Pseudomonas aeruginosa (strain ATCC 15692 / DSM 22644 / CIP 104116 / JCM 14847 / LMG 12228 / 1C / PRS 101 / PAO1).